A 966-amino-acid polypeptide reads, in one-letter code: Alanine--tRNA ligase (966 aa).

Zn(2+) is bound by residues His-646, His-650, Cys-750, and His-754. The tract at residues 927–949 is disordered; it reads DRLGGGGGGRPSLASAGGRDPEA.

Belongs to the class-II aminoacyl-tRNA synthetase family. It depends on Zn(2+) as a cofactor.

It localises to the cytoplasm. It catalyses the reaction tRNA(Ala) + L-alanine + ATP = L-alanyl-tRNA(Ala) + AMP + diphosphate. Catalyzes the attachment of alanine to tRNA(Ala) in a two-step reaction: alanine is first activated by ATP to form Ala-AMP and then transferred to the acceptor end of tRNA(Ala). Also edits incorrectly charged Ser-tRNA(Ala) and Gly-tRNA(Ala) via its editing domain. In Salinibacter ruber (strain DSM 13855 / M31), this protein is Alanine--tRNA ligase.